Consider the following 729-residue polypeptide: Fatty acid oxidation complex subunit alpha (729 aa).

Residues 1-189 form an enoyl-CoA hydratase/isomerase region; that stretch reads MLYKGDTLYL…KIGLVDGVVK (189 aa). Asp296 contributes to the substrate binding site. The interval 311 to 729 is 3-hydroxyacyl-CoA dehydrogenase; the sequence is ETPKQAAVLG…ARPVGDLKTA (419 aa). NAD(+) is bound by residues Met324, Asp343, 400-402, Lys407, and Ser429; that span reads VVE. The active-site For 3-hydroxyacyl-CoA dehydrogenase activity is His450. Residue Asn453 coordinates NAD(+). Positions 500 and 660 each coordinate substrate. The tract at residues 708–729 is disordered; sequence RHNEPYYPPVEPARPVGDLKTA.

The protein in the N-terminal section; belongs to the enoyl-CoA hydratase/isomerase family. It in the C-terminal section; belongs to the 3-hydroxyacyl-CoA dehydrogenase family. In terms of assembly, heterotetramer of two alpha chains (FadB) and two beta chains (FadA).

It catalyses the reaction a (3S)-3-hydroxyacyl-CoA + NAD(+) = a 3-oxoacyl-CoA + NADH + H(+). The catalysed reaction is a (3S)-3-hydroxyacyl-CoA = a (2E)-enoyl-CoA + H2O. It carries out the reaction a 4-saturated-(3S)-3-hydroxyacyl-CoA = a (3E)-enoyl-CoA + H2O. The enzyme catalyses (3S)-3-hydroxybutanoyl-CoA = (3R)-3-hydroxybutanoyl-CoA. It catalyses the reaction a (3Z)-enoyl-CoA = a 4-saturated (2E)-enoyl-CoA. The catalysed reaction is a (3E)-enoyl-CoA = a 4-saturated (2E)-enoyl-CoA. Its pathway is lipid metabolism; fatty acid beta-oxidation. Its function is as follows. Involved in the aerobic and anaerobic degradation of long-chain fatty acids via beta-oxidation cycle. Catalyzes the formation of 3-oxoacyl-CoA from enoyl-CoA via L-3-hydroxyacyl-CoA. It can also use D-3-hydroxyacyl-CoA and cis-3-enoyl-CoA as substrate. The sequence is that of Fatty acid oxidation complex subunit alpha from Citrobacter koseri (strain ATCC BAA-895 / CDC 4225-83 / SGSC4696).